We begin with the raw amino-acid sequence, 693 residues long: Elongation factor G 1 (693 aa).

One can recognise a tr-type G domain in the interval 4–281 (NKLRNIGISA…AVTRFLPSPH (278 aa)). GTP contacts are provided by residues 13-20 (AHIDSGKT), 80-84 (DTPGH), and 134-137 (NKCD).

It belongs to the TRAFAC class translation factor GTPase superfamily. Classic translation factor GTPase family. EF-G/EF-2 subfamily.

It is found in the cytoplasm. Functionally, catalyzes the GTP-dependent ribosomal translocation step during translation elongation. During this step, the ribosome changes from the pre-translocational (PRE) to the post-translocational (POST) state as the newly formed A-site-bound peptidyl-tRNA and P-site-bound deacylated tRNA move to the P and E sites, respectively. Catalyzes the coordinated movement of the two tRNA molecules, the mRNA and conformational changes in the ribosome. The chain is Elongation factor G 1 from Borrelia garinii subsp. bavariensis (strain ATCC BAA-2496 / DSM 23469 / PBi) (Borreliella bavariensis).